Here is a 546-residue protein sequence, read N- to C-terminus: Glucose-6-phosphate isomerase (546 aa).

Residue E356 is the Proton donor of the active site. Active-site residues include H387 and K507.

The protein belongs to the GPI family.

The protein localises to the cytoplasm. The catalysed reaction is alpha-D-glucose 6-phosphate = beta-D-fructose 6-phosphate. It functions in the pathway carbohydrate biosynthesis; gluconeogenesis. Its pathway is carbohydrate degradation; glycolysis; D-glyceraldehyde 3-phosphate and glycerone phosphate from D-glucose: step 2/4. Functionally, catalyzes the reversible isomerization of glucose-6-phosphate to fructose-6-phosphate. The chain is Glucose-6-phosphate isomerase from Syntrophus aciditrophicus (strain SB).